The following is a 150-amino-acid chain: Urease accessory protein UreE (150 aa).

The protein belongs to the UreE family.

Its subcellular location is the cytoplasm. Involved in urease metallocenter assembly. Binds nickel. Probably functions as a nickel donor during metallocenter assembly. The polypeptide is Urease accessory protein UreE (Staphylococcus aureus (strain Mu3 / ATCC 700698)).